Here is an 85-residue protein sequence, read N- to C-terminus: Large ribosomal subunit protein bL27 (85 aa).

A disordered region spans residues 1–22; it reads MAHKKAGGSTRNGRDSESKRLG.

The protein belongs to the bacterial ribosomal protein bL27 family.

This is Large ribosomal subunit protein bL27 from Vibrio parahaemolyticus serotype O3:K6 (strain RIMD 2210633).